A 283-amino-acid polypeptide reads, in one-letter code: MSAITEAGSSKFIDVTEGEINGSIHVNDAGNGDEVVVMFHGSGPGASGWSNFHRNVDAFVDAGYRVLLIDSPGFNKSYPIVTKSRDGAYAQAAKGVMDKLGIKRAHMIGNSMGGATAMRMAVDYPEMVGKLVMMGGGSVGGSTTTPMPTEGLKLLQGLYRNPSMENLRKMLDIFVYAPSTLTEELINGRFENMMRRPEHLTNFVESLKASGGRANYAHLLPTLTMPTMIIWGRDDRFVPLDLGLRMLWGMPDAELHVFSKCGHWAQWEHADKFNQLVLNFLAR.

Residues 35-269 (VVVMFHGSGP…KCGHWAQWEH (235 aa)) enclose the AB hydrolase-1 domain. His-263 serves as the catalytic Proton acceptor.

It belongs to the AB hydrolase superfamily. MhpC family. Homodimer.

It carries out the reaction (2Z,4E)-2-hydroxy-6-oxonona-2,4-dienedioate + H2O = (2Z)-2-hydroxypenta-2,4-dienoate + succinate + H(+). The catalysed reaction is (2Z,4E,7E)-2-hydroxy-6-oxonona-2,4,7-trienedioate + H2O = (2Z)-2-hydroxypenta-2,4-dienoate + fumarate + H(+). Its pathway is aromatic compound metabolism; 3-phenylpropanoate degradation. Functionally, catalyzes the cleavage of the C5-C6 bond of 2-hydroxy-6-oxononadienedioate and 2-hydroxy-6-oxononatrienedioate, a dienol ring fission product of the bacterial meta-cleavage pathway for degradation of phenylpropionic acid. The protein is 2-hydroxy-6-oxononadienedioate/2-hydroxy-6-oxononatrienedioate hydrolase of Pseudomonas sp.